The sequence spans 562 residues: Glucocorticoid modulatory element-binding protein 1 (562 aa).

An N-acetylalanine modification is found at A2. Residues 72 to 156 enclose the SAND domain; it reads ASSIEGNEDM…RKMMDSGQID (85 aa). Position 103 (C103) interacts with Zn(2+). Residues K129, K133, K136, and R147 each contribute to the DNA site. 3 residues coordinate Zn(2+): H160, C164, and C168. Residues 311–355 adopt a coiled-coil conformation; that stretch reads LDNRRKQVEQGEEQFLYTLADLERQLEEQKKQAQDPRLKSQTVQN. The disordered stretch occupies residues 360 to 384; it reads PVSTPKPPKRPRLQRPASTTVLSPS. Residues 375–384 are compositionally biased toward polar residues; that stretch reads PASTTVLSPS.

In terms of assembly, homodimer, and heterodimer of GMEB1 and GMEB2. Interacts with TRIM63. Interacts with the glucocorticoid receptor (NR3C1) and NCOA2/TIF2. May interact with HSP27 and CREB-binding protein (CBP). Ubiquitous. Low levels were detected in heart, brain, spleen, lung, liver, skeletal muscle, kidney and testis.

The protein localises to the nucleus. It is found in the cytoplasm. In terms of biological role, trans-acting factor that binds to glucocorticoid modulatory elements (GME) present in the TAT (tyrosine aminotransferase) promoter and increases sensitivity to low concentrations of glucocorticoids. Also binds to the transferrin receptor promoter. This is Glucocorticoid modulatory element-binding protein 1 (Gmeb1) from Mus musculus (Mouse).